The sequence spans 404 residues: Serine/threonine transporter SstT (404 aa).

9 helical membrane passes run 11–31, 44–64, 82–102, 144–164, 179–199, 218–238, 290–310, 316–336, and 363–383; these read IINA…IILA, LGGL…FVLV, IISL…TMSF, TANY…LHHA, VSFI…GLVA, GVLL…MVFI, IPLG…VLTL, MGIQ…AISA, and VAMQ…SAET.

It belongs to the dicarboxylate/amino acid:cation symporter (DAACS) (TC 2.A.23) family.

The protein resides in the cell inner membrane. The catalysed reaction is L-serine(in) + Na(+)(in) = L-serine(out) + Na(+)(out). The enzyme catalyses L-threonine(in) + Na(+)(in) = L-threonine(out) + Na(+)(out). Involved in the import of serine and threonine into the cell, with the concomitant import of sodium (symport system). In Desulfotalea psychrophila (strain LSv54 / DSM 12343), this protein is Serine/threonine transporter SstT.